A 245-amino-acid chain; its full sequence is NAD-dependent protein deacetylase (245 aa).

A Deacetylase sirtuin-type domain is found at Met1–Ile245. The NAD(+) site is built by Ala26, Thr30, Phe37, Arg38, Gln107, Ile109, Asp110, and His125. Phe37 contacts nicotinamide. Nicotinamide is bound by residues Ile109 and Asp110. His125 (proton acceptor) is an active-site residue. Zn(2+)-binding residues include Cys133, Cys136, Cys155, and Cys158. Residues Thr196, Ser197, Asn219, and Ile237 each coordinate NAD(+).

Belongs to the sirtuin family. Class U subfamily. The cofactor is Zn(2+).

Its subcellular location is the cytoplasm. It catalyses the reaction N(6)-acetyl-L-lysyl-[protein] + NAD(+) + H2O = 2''-O-acetyl-ADP-D-ribose + nicotinamide + L-lysyl-[protein]. Its function is as follows. NAD-dependent protein deacetylase which modulates the activities of several enzymes which are inactive in their acetylated form. This is NAD-dependent protein deacetylase from Clostridium acetobutylicum (strain ATCC 824 / DSM 792 / JCM 1419 / IAM 19013 / LMG 5710 / NBRC 13948 / NRRL B-527 / VKM B-1787 / 2291 / W).